The primary structure comprises 984 residues: Serine/threonine-protein kinase N2 (984 aa).

The residue at position 21 (Ser21) is a Phosphoserine. An REM-1 1 domain is found at 33–109 (KLDFSDTMVQ…LQELNAHIVV (77 aa)). The residue at position 77 (Lys77) is an N6-acetyllysine. Ser110 carries the phosphoserine modification. A disordered region spans residues 114–133 (DITDCPRTPDTPNNDPRCST). Phosphothreonine is present on residues Thr121 and Thr124. REM-1 domains follow at residues 121 to 203 (TPDT…TNEL) and 204 to 284 (AFDN…EVPK). Positions 123-133 (DTPNNDPRCST) are enriched in polar residues. A phosphoserine mark is found at Ser302, Ser306, Ser360, and Ser362. The tract at residues 351-383 (ATSVALPGWSPSETRSSFMSRTSKSKSGSSRNL) is disordered. Residues 353–473 (SVALPGWSPS…LYLEPQGTLF (121 aa)) form the C2 domain. Residues 364-381 (TRSSFMSRTSKSKSGSSR) are compositionally biased toward low complexity. A necessary to rescue apical junction formation region spans residues 382–463 (NLLKTDDLSN…FLDNQRHGMC (82 aa)). Phosphoserine occurs at positions 535, 583, and 620. Residues 558–584 (ASDSTVTKLDFDLEPEPPPAPPRASSL) are disordered. Residue Thr628 is modified to Phosphothreonine. Ser631 carries the post-translational modification Phosphoserine. The 260-residue stretch at 657–916 (FRCCAVLGRG…AEDVKKHPFF (260 aa)) folds into the Protein kinase domain. ATP is bound by residues 663–671 (LGRGHFGKV) and Lys686. The active-site Proton acceptor is the Asp782. Residue Thr816 is modified to Phosphothreonine; by PDPK1. The tract at residues 917 to 977 (RLIDWSALMD…EEEQEMFRDF (61 aa)) is necessary for the catalytic activity. One can recognise an AGC-kinase C-terminal domain in the interval 917-984 (RLIDWSALMD…RDFDYIADWC (68 aa)). Phosphoserine is present on Ser952. At Thr958 the chain carries Phosphothreonine. A negatively regulates the responsiveness of the catalytic activity by cardiolipin and is required for optimal activation by the GTP-bound RhoA region spans residues 978–984 (DYIADWC).

Belongs to the protein kinase superfamily. AGC Ser/Thr protein kinase family. PKC subfamily. In terms of assembly, interacts (via the REM repeats) with RHOA (GTP-bound form preferentially) and interacts (via the REM repeats) with RAC1 (GTP-bound form preferentially); the interactions induce its autophosphorylation. Interacts with RHOC. Interacts with NCK1 and NCK2. Interacts with NCK1 (via SH3 domains). Interacts with CD44. Interacts (via C-terminal kinase domain) with PDPK1; the interaction stimulates PDPK1 kinase activity. Interacts with MAP3K2; the interaction activates PRK2 kinase activity in a MAP3K2-independent kinase activity. Interacts (via C-terminal domain) with AKT1; the interaction occurs with the C-terminal cleavage product of PRK2 in apoptotic cells. Interacts (via C-terminus) with PTPN13 (via PDZ 3 domain). Interacts with CDK10. (Microbial infection) Interacts with HCV NS5B (via N-terminal finger domain). Post-translationally, autophosphorylated. Phosphorylated during mitosis. Phosphorylated by CDK10. In terms of processing, activated by limited proteolysis with trypsin. Proteolytically cleaved by caspase-3 during the induction of apoptotic cell death. In terms of tissue distribution, ubiquitous. Expressed in numerous tumor cell lines, especially in bladder tumor cells.

It is found in the cytoplasm. The protein localises to the nucleus. It localises to the membrane. Its subcellular location is the cell projection. The protein resides in the lamellipodium. It is found in the cytoskeleton. The protein localises to the cleavage furrow. It localises to the midbody. Its subcellular location is the cell junction. It carries out the reaction L-seryl-[protein] + ATP = O-phospho-L-seryl-[protein] + ADP + H(+). The enzyme catalyses L-threonyl-[protein] + ATP = O-phospho-L-threonyl-[protein] + ADP + H(+). Kinase activity is activated upon binding to GTP-bound Rhoa/Rac1 GTPases. Activated by caspase-3 (CASP3) cleavage during apoptosis. Activated by lipids, particularly cardiolipin and to a lesser extent by other acidic phospholipids and unsaturated fatty acids. Two specific sites, Thr-816 (activation loop of the kinase domain) and Thr-958 (turn motif), need to be phosphorylated for its full activation. Functionally, PKC-related serine/threonine-protein kinase and Rho/Rac effector protein that participates in specific signal transduction responses in the cell. Plays a role in the regulation of cell cycle progression, actin cytoskeleton assembly, cell migration, cell adhesion, tumor cell invasion and transcription activation signaling processes. Phosphorylates CTTN in hyaluronan-induced astrocytes and hence decreases CTTN ability to associate with filamentous actin. Phosphorylates HDAC5, therefore lead to impair HDAC5 import. Direct RhoA target required for the regulation of the maturation of primordial junctions into apical junction formation in bronchial epithelial cells. Required for G2/M phases of the cell cycle progression and abscission during cytokinesis in a ECT2-dependent manner. Stimulates FYN kinase activity that is required for establishment of skin cell-cell adhesion during keratinocytes differentiation. Regulates epithelial bladder cells speed and direction of movement during cell migration and tumor cell invasion. Inhibits Akt pro-survival-induced kinase activity. Mediates Rho protein-induced transcriptional activation via the c-fos serum response factor (SRF). Involved in the negative regulation of ciliogenesis. Its function is as follows. (Microbial infection) Phosphorylates HCV NS5B leading to stimulation of HCV RNA replication. The chain is Serine/threonine-protein kinase N2 (PKN2) from Homo sapiens (Human).